Reading from the N-terminus, the 287-residue chain is T-cell ecto-ADP-ribosyltransferase 1 (287 aa).

A signal peptide spans 1–20 (MPSNNFKFFLTWWLTQQVTG). 3 disulfide bridges follow: cysteine 41/cysteine 246, cysteine 80/cysteine 201, and cysteine 141/cysteine 193. Residues 61–241 (EELKLEWEKA…ISLDSPKRKK (181 aa)) form the TR mART core domain. Residues tyrosine 98 and arginine 146 each contribute to the NAD(+) site. Residues arginine 146 and serine 167 contribute to the active site. Asparagine 171 is a glycosylation site (N-linked (GlcNAc...) asparagine). Serine 202 contributes to the NAD(+) binding site. Glutamate 209 is an active-site residue. N-linked (GlcNAc...) asparagine glycosylation is present at asparagine 256. Serine 258 carries the GPI-anchor amidated serine lipid modification. Residues 259–287 (SLGSRESCVSLFLVVLLGLLVQQLTLAEP) constitute a propeptide, removed in mature form.

Belongs to the Arg-specific ADP-ribosyltransferase family. In terms of processing, it is proposed that in the absence of reducing agents, a disulfide bond is formed between Cys-80 and Cys-201, leading to a conformational change that reduces the catalytic rate of NAD glycohydrolysis. In terms of tissue distribution, expressed in spleen, intestine and thymus.

It localises to the cell membrane. It catalyses the reaction L-arginyl-[protein] + NAD(+) = N(omega)-(ADP-D-ribosyl)-L-arginyl-[protein] + nicotinamide + H(+). The catalysed reaction is NAD(+) + H2O = ADP-D-ribose + nicotinamide + H(+). Its function is as follows. Has both ADP-ribosyltransferase activity and thiol-dependent NAD(+) glycohydrolase activity. The protein is T-cell ecto-ADP-ribosyltransferase 1 (Art2a) of Mus musculus (Mouse).